A 236-amino-acid polypeptide reads, in one-letter code: Protein INCA1 (236 aa).

At serine 23 the chain carries Phosphoserine. Positions 75–99 are interaction with CCNA1 and CCNA1/CDK2 complex; essential for CDK2 inhibitory activity; the sequence is GLYPPEQLPPPEMLWRRKKRRPCLE. The Nuclear localization signal motif lies at 90–95; it reads RRKKRR. Position 182 is a phosphothreonine (threonine 182). Phosphoserine occurs at positions 191 and 194.

This sequence belongs to the INCA family. As to quaternary structure, interacts with CCNA1. Interacts with CCNA2, CCNB1 and CCNE1. Found in a complex with CCNA1 and CDK2. Interacts with ZNF16; the interaction inhibits INCA1 activity and induces the cell cycle process. Interacts with SPACA9. Interacts with the CCNA1/CDK2 complex. Interacts with ING5, DAZAP2, RNF26, USP15, SPOUT1, DPH7, TRIM26 and RAB5C. In terms of processing, phosphorylated when part of a complex with CCNA1 and CDK2. Strongly phosphorylated by CDK2 on its C-terminal region spanning amino acid 149-221. Less intensively phosphorylated by CDK2 on its first 75 amino acid residues. In terms of tissue distribution, detected in testis, and at lower levels in ovary. Detected at very low levels in testis tumors. Down-regulated in bone marrow cells in acute myeloid and lymphoid leukemia patients as compared with normal bone marrow cells.

The protein localises to the nucleus. The protein resides in the cytoplasm. Functionally, binds to CDK2-bound cyclins and inhibits the kinase activity of CDK2; binding to cyclins is critical for its function as CDK inhibitor. Inhibits cell growth and cell proliferation and may play a role in cell cycle control. Required for ING5-mediated regulation of S-phase progression, enhancement of Fas-induced apoptosis and inhibition of cell growth. This chain is Protein INCA1 (INCA1), found in Homo sapiens (Human).